The following is a 98-amino-acid chain: Hainantoxin-XVII.2 (98 aa).

An N-terminal signal peptide occupies residues 1–40; sequence MTTVGVSLFRRSPEKITMKIAAFLGLSFLLIASYVLICEA. Residues 41 to 64 constitute a propeptide that is removed on maturation; it reads QHPGFQELLILEENMRDPENSKER. 3 disulfide bridges follow: C66–C81, C73–C85, and C80–C95.

This sequence belongs to the hainantoxin family. 17 subfamily. As to expression, expressed by the venom gland.

It is found in the secreted. In terms of biological role, putative ion channel inhibitor. The polypeptide is Hainantoxin-XVII.2 (Cyriopagopus hainanus (Chinese bird spider)).